Consider the following 297-residue polypeptide: 4-hydroxy-tetrahydrodipicolinate synthase (297 aa).

A pyruvate-binding site is contributed by threonine 49. Tyrosine 137 functions as the Proton donor/acceptor in the catalytic mechanism. Lysine 166 acts as the Schiff-base intermediate with substrate in catalysis. Pyruvate is bound at residue isoleucine 208.

The protein belongs to the DapA family. In terms of assembly, homotetramer; dimer of dimers.

Its subcellular location is the cytoplasm. The catalysed reaction is L-aspartate 4-semialdehyde + pyruvate = (2S,4S)-4-hydroxy-2,3,4,5-tetrahydrodipicolinate + H2O + H(+). It participates in amino-acid biosynthesis; L-lysine biosynthesis via DAP pathway; (S)-tetrahydrodipicolinate from L-aspartate: step 3/4. Functionally, catalyzes the condensation of (S)-aspartate-beta-semialdehyde [(S)-ASA] and pyruvate to 4-hydroxy-tetrahydrodipicolinate (HTPA). The sequence is that of 4-hydroxy-tetrahydrodipicolinate synthase from Porphyromonas gingivalis (strain ATCC 33277 / DSM 20709 / CIP 103683 / JCM 12257 / NCTC 11834 / 2561).